The following is a 48-amino-acid chain: Large ribosomal subunit protein bL33A (48 aa).

It belongs to the bacterial ribosomal protein bL33 family.

The sequence is that of Large ribosomal subunit protein bL33A from Shouchella clausii (strain KSM-K16) (Alkalihalobacillus clausii).